The primary structure comprises 591 residues: Aspartate--tRNA(Asp/Asn) ligase (591 aa).

Glu174 is a binding site for L-aspartate. Residues 198 to 201 (QLFK) are aspartate. Arg220 lines the L-aspartate pocket. Residues 220-222 (RDE) and Gln229 contribute to the ATP site. An L-aspartate-binding site is contributed by His450. Glu483 contributes to the ATP binding site. Arg490 lines the L-aspartate pocket. 535–538 (GLDR) contributes to the ATP binding site.

Belongs to the class-II aminoacyl-tRNA synthetase family. Type 1 subfamily. Homodimer.

The protein localises to the cytoplasm. The catalysed reaction is tRNA(Asx) + L-aspartate + ATP = L-aspartyl-tRNA(Asx) + AMP + diphosphate. Its function is as follows. Aspartyl-tRNA synthetase with relaxed tRNA specificity since it is able to aspartylate not only its cognate tRNA(Asp) but also tRNA(Asn). Reaction proceeds in two steps: L-aspartate is first activated by ATP to form Asp-AMP and then transferred to the acceptor end of tRNA(Asp/Asn). In Pseudomonas syringae pv. syringae (strain B728a), this protein is Aspartate--tRNA(Asp/Asn) ligase.